A 274-amino-acid chain; its full sequence is Large ribosomal subunit protein uL2 (274 aa).

The interval 221–256 (RGTAMNPVDHPHGGGEGRNFGKHPVTPWGVPTKGYK) is disordered.

It belongs to the universal ribosomal protein uL2 family. In terms of assembly, part of the 50S ribosomal subunit. Forms a bridge to the 30S subunit in the 70S ribosome.

Its function is as follows. One of the primary rRNA binding proteins. Required for association of the 30S and 50S subunits to form the 70S ribosome, for tRNA binding and peptide bond formation. It has been suggested to have peptidyltransferase activity; this is somewhat controversial. Makes several contacts with the 16S rRNA in the 70S ribosome. The sequence is that of Large ribosomal subunit protein uL2 from Thioalkalivibrio sulfidiphilus (strain HL-EbGR7).